The following is a 299-amino-acid chain: Neomycin C epimerase (299 aa).

Residues 10 to 222 form the Radical SAM core domain; that stretch reads PVRQVRAYRN…WNHIFETGRR (213 aa). [4Fe-4S] cluster-binding residues include Cys26, Cys30, Cys33, Cys226, and Cys247. Cys249 acts as the Proton donor in catalysis. The [4Fe-4S] cluster site is built by Cys271 and Cys274.

Belongs to the radical SAM superfamily. [4Fe-4S] cluster is required as a cofactor.

It catalyses the reaction neomycin C + AH2 + S-adenosyl-L-methionine = neomycin B + 5'-deoxyadenosine + L-methionine + A + H(+). The protein operates within antibiotic biosynthesis; neomycin biosynthesis. Functionally, catalyzes the last step of neomycin B biosynthesis, i.e. the irreversible epimerization at C-5''' of neomycin C to give neomycin B. To a lesser extent, is also able to convert neomycin Y2 to neomycin Y1. The chain is Neomycin C epimerase from Streptomyces fradiae (Streptomyces roseoflavus).